We begin with the raw amino-acid sequence, 1036 residues long: Beta-galactosidase (1036 aa).

Asparagine 97 and aspartate 197 together coordinate substrate. Aspartate 197 serves as a coordination point for Na(+). The Mg(2+) site is built by glutamate 411, histidine 413, and glutamate 456. Residues glutamate 456 and 532–535 (EYAH) each bind substrate. Residue glutamate 456 is the Proton donor of the active site. Glutamate 532 acts as the Nucleophile in catalysis. Asparagine 592 is a Mg(2+) binding site. Phenylalanine 596 and aspartate 599 together coordinate Na(+). Positions 599 and 1006 each coordinate substrate.

It belongs to the glycosyl hydrolase 2 family. Homotetramer. Mg(2+) is required as a cofactor. The cofactor is Na(+).

The enzyme catalyses Hydrolysis of terminal non-reducing beta-D-galactose residues in beta-D-galactosides.. The chain is Beta-galactosidase from Leuconostoc mesenteroides subsp. mesenteroides (strain ATCC 8293 / DSM 20343 / BCRC 11652 / CCM 1803 / JCM 6124 / NCDO 523 / NBRC 100496 / NCIMB 8023 / NCTC 12954 / NRRL B-1118 / 37Y).